A 943-amino-acid polypeptide reads, in one-letter code: Isoleucine--tRNA ligase (943 aa).

The 'HIGH' region motif lies at 59–69 (PYANGQIHLGH). Glu577 serves as a coordination point for L-isoleucyl-5'-AMP. The short motif at 618-622 (KMSKS) is the 'KMSKS' region element. Residue Lys621 coordinates ATP. 4 residues coordinate Zn(2+): Cys906, Cys909, Cys926, and Cys929.

The protein belongs to the class-I aminoacyl-tRNA synthetase family. IleS type 1 subfamily. As to quaternary structure, monomer. The cofactor is Zn(2+).

Its subcellular location is the cytoplasm. The enzyme catalyses tRNA(Ile) + L-isoleucine + ATP = L-isoleucyl-tRNA(Ile) + AMP + diphosphate. Its function is as follows. Catalyzes the attachment of isoleucine to tRNA(Ile). As IleRS can inadvertently accommodate and process structurally similar amino acids such as valine, to avoid such errors it has two additional distinct tRNA(Ile)-dependent editing activities. One activity is designated as 'pretransfer' editing and involves the hydrolysis of activated Val-AMP. The other activity is designated 'posttransfer' editing and involves deacylation of mischarged Val-tRNA(Ile). The polypeptide is Isoleucine--tRNA ligase (Xanthomonas axonopodis pv. citri (strain 306)).